A 157-amino-acid polypeptide reads, in one-letter code: UPF0262 protein RL0614 (157 aa).

This sequence belongs to the UPF0262 family.

The sequence is that of UPF0262 protein RL0614 from Rhizobium johnstonii (strain DSM 114642 / LMG 32736 / 3841) (Rhizobium leguminosarum bv. viciae).